Consider the following 203-residue polypeptide: Dephospho-CoA kinase (203 aa).

The 200-residue stretch at valine 4–glutamate 203 folds into the DPCK domain. Alanine 12–threonine 17 contributes to the ATP binding site.

This sequence belongs to the CoaE family.

Its subcellular location is the cytoplasm. It catalyses the reaction 3'-dephospho-CoA + ATP = ADP + CoA + H(+). The protein operates within cofactor biosynthesis; coenzyme A biosynthesis; CoA from (R)-pantothenate: step 5/5. Its function is as follows. Catalyzes the phosphorylation of the 3'-hydroxyl group of dephosphocoenzyme A to form coenzyme A. This Staphylococcus epidermidis (strain ATCC 12228 / FDA PCI 1200) protein is Dephospho-CoA kinase.